Consider the following 695-residue polypeptide: Lactotransferrin (695 aa).

The N-terminal stretch at 1-6 is a signal peptide; sequence LGLCLA. 2 Transferrin-like domains span residues 12 to 339 and 351 to 680; these read VRWC…NLRE and VVWC…NLRR. 2 disulfides stabilise this stretch: C15–C51 and C25–C42. D66 contacts Fe(3+). K79 is an active-site residue. Y98 lines the Fe(3+) pocket. 5 disulfide bridges follow: C121–C204, C163–C179, C166–C189, C176–C187, and C237–C251. 4 residues coordinate hydrogencarbonate: T123, R127, A129, and G130. N143 carries N-linked (GlcNAc...) asparagine glycosylation. Y198 provides a ligand contact to Fe(3+). H259 contacts Fe(3+). The active-site Nucleophile is the S265. Residue N287 is glycosylated (N-linked (GlcNAc...) asparagine). 2 disulfides stabilise this stretch: C354/C386 and C364/C377. D401 lines the Fe(3+) pocket. 8 disulfides stabilise this stretch: C411/C690, C431/C653, C463/C538, C487/C681, C497/C511, C508/C521, C579/C593, and C631/C636. P436 serves as a coordination point for D-glucose. Y439 contacts Fe(3+). Residues T465, R469, A471, and A472 each contribute to the hydrogencarbonate site. Residue N482 is glycosylated (N-linked (GlcNAc...) asparagine). Y532 is a Fe(3+) binding site. N600 lines the D-glucose pocket. Residue H601 participates in Fe(3+) binding. Residue Y666 participates in D-glucose binding.

Belongs to the transferrin family. Monomer. Found in a complex with LTF, CLU, EPPIN and SEMG1. Found in a complex with MPO and LTF; interacts directly with CP, allows Fe(3+) incorporation into LTF and activation of CP ferroxidase activity. Post-translationally, poly-N-acetyllactosaminic carbohydrate moiety seems to be needed for TLR4 activation.

Its subcellular location is the secreted. The protein localises to the cytoplasmic granule. In terms of biological role, transferrins are iron binding transport proteins which can bind two Fe(3+) ions in association with the binding of an anion, usually bicarbonate. Functionally, major iron-binding and multifunctional protein found in exocrine fluids such as breast milk and mucosal secretions. Has antimicrobial activity, which depends on the extracellular cation concentration. Antimicrobial properties include bacteriostasis, which is related to its ability to sequester free iron and thus inhibit microbial growth, as well as direct bactericidal properties leading to the release of lipopolysaccharides from the bacterial outer membrane. Can also prevent bacterial biofilm development in P.aeruginosa infection. Has weak antifungal activity against C.albicans. Has anabolic, differentiating and anti-apoptotic effects on osteoblasts and can also inhibit osteoclastogenesis, possibly playing a role in the regulation of bone growth. Promotes binding of species C adenoviruses to epithelial cells, promoting adenovirus infection. Can inhibit papillomavirus infections. Stimulates the TLR4 signaling pathway leading to NF-kappa-B activation and subsequent pro-inflammatory cytokine production while also interfering with the lipopolysaccharide (LPS)-stimulated TLR4 signaling. Inhibits neutrophil granulocyte migration to sites of apoptosis, when secreted by apoptotic cells. Stimulates VEGFA-mediated endothelial cell migration and proliferation. Binds heparin, chondroitin sulfate and possibly other glycosaminoglycans (GAGs). Also binds specifically to pneumococcal surface protein A (PspA), the lipid A portion of bacterial lipopolysaccharide (LPS), lysozyme and DNA. Lactoferricin binds to the bacterial surface and is crucial for the bactericidal functions. Has some antiviral activity against papillomavirus infection. N-terminal region shows strong antifungal activity against C.albicans. Contains two BBXB heparin-binding consensus sequences that appear to form the predominate functional GAG-binding site. Its function is as follows. The lactotransferrin transferrin-like domain 1 functions as a serine protease of the peptidase S60 family that cuts arginine rich regions. This function contributes to the antimicrobial activity. Shows a preferential cleavage at -Arg-Ser-Arg-Arg-|- and -Arg-Arg-Ser-Arg-|-, and of Z-Phe-Arg-|-aminomethylcoumarin sites. In Equus caballus (Horse), this protein is Lactotransferrin (LTF).